Consider the following 1238-residue polypeptide: Virulence sensor protein BvgS (1238 aa).

The N-terminal stretch at 1 to 32 (MPAPHRLYPRSLICLAQALLAWALLAWAPAQA) is a signal peptide. At 33 to 307 (SQELTLVGKA…REQQWMADHP (275 aa)) the chain is on the cytoplasmic side. Residues 308–331 (VVKVAVLNLFAPFTLFRTDEQFGG) form a helical membrane-spanning segment. The Periplasmic portion of the chain corresponds to 332-541 (ISAAVLQLLQ…PRTWYAYRNE (210 aa)). A helical transmembrane segment spans residues 542-563 (IYLLIGLGLLSALLFLSWIVYL). Topologically, residues 564–1238 (RRQIRQRKRA…LEQRPHQDQP (675 aa)) are cytoplasmic. Residues 580–651 (QLEFMRVLID…MHEFLLTRVA (72 aa)) enclose the PAS domain. Residues 652–708 (AEREPRFEDRDVTLHGRTRHVYQWTIPYGDSLGELKGIIGGWIDITERAELLRKLHD) enclose the PAC domain. One can recognise a Histidine kinase domain in the interval 726-948 (TMSHEIRTPM…TVSVDLRLTM (223 aa)). H729 carries the post-translational modification Phosphohistidine; by autocatalysis. The 122-residue stretch at 974–1095 (RVLVVDDHKP…ALRQRLNEAV (122 aa)) folds into the Response regulatory domain. D1023 is modified (4-aspartylphosphate). Positions 1133–1228 (DEALIRQLLE…AALETQLRAW (96 aa)) constitute an HPt domain. H1172 is modified (phosphohistidine).

Post-translationally, activation requires a sequential transfer of a phosphate group from a His in the primary transmitter domain, to an Asp in the receiver domain and to a His in the secondary transmitter domain.

It localises to the cell inner membrane. It catalyses the reaction ATP + protein L-histidine = ADP + protein N-phospho-L-histidine.. In terms of biological role, member of the two-component regulatory system BvgS/BvgA. Phosphorylates BvgA via a four-step phosphorelay in response to environmental signals. The sequence is that of Virulence sensor protein BvgS (bvgS) from Bordetella pertussis (strain Tohama I / ATCC BAA-589 / NCTC 13251).